The chain runs to 1493 residues: Son of sevenless homolog (1493 aa).

A DH domain is found at 244 to 448; it reads TYESVAVDFL…ERVVGCVSDM (205 aa). The region spanning 496-606 is the PH domain; the sequence is ELEKDGDLGM…WMAVLVKVTT (111 aa). In terms of domain architecture, N-terminal Ras-GEF spans 656 to 824; the sequence is GIPVIKCGTV…TILALIEKRV (169 aa). One can recognise a Ras-GEF domain in the interval 897–1164; that stretch reads HPIEIGRQLT…YNKSLEIQPK (268 aa). 3 disordered regions span residues 1067–1091, 1165–1248, and 1263–1493; these read KSPP…DPEN, GLDT…DDAP, and HPKI…SSNK. Over residues 1079–1088 the composition is skewed to basic and acidic residues; that stretch reads QQKDDLKASD. Polar residues-rich tracts occupy residues 1208–1231 and 1279–1289; these read HSQN…NTPL and SRANQSNSVSL. Positions 1308-1326 are enriched in low complexity; the sequence is STATSPTTLTTTTTPSSAG. A compositionally biased stretch (polar residues) spans 1350–1361; that stretch reads LTPSRDNSSPSA. Residues 1381–1400 show a composition bias toward low complexity; it reads STSSDVSSSPSTSGSTSSAT. Over residues 1402 to 1417 the composition is skewed to basic and acidic residues; it reads ENQEQLRVIFDREESH. Residues 1426 to 1435 are compositionally biased toward pro residues; the sequence is PLPPALPPPR. Positions 1453 to 1464 are enriched in polar residues; the sequence is HNSNSPTLSSEQ.

In terms of assembly, interacts with cmd-1 in the presence of Ca(2+).

In terms of biological role, promotes the exchange of Ras-bound GDP by GTP. May regulate signaling pathways downstream of receptor tyrosine kinase, egl-15 and let-23. Required for larval and male spicule development, fluid homeostasis, vulva induction, spermatogenesis, and oogenesis by promoting meiosis prophase exit during oocyte maturation. Required for the delamination of G1 cell by promoting the loss of cell junctions and detachment from the excretory system during larval development. Plays a role in nicotinic acetylcholine receptor (nAChR)-mediated sensitivity to nicotine. Regulates synaptic levels of nAchR subunit lev-1 in the nerve cord. The chain is Son of sevenless homolog from Caenorhabditis elegans.